The primary structure comprises 162 residues: Lymphocyte antigen 86 (162 aa).

An N-terminal signal peptide occupies residues 1–20 (MKGFTATLFLWTLIFPSCSG). Intrachain disulfides connect Cys-33–Cys-58, Cys-45–Cys-154, and Cys-102–Cys-112. N-linked (GlcNAc...) asparagine glycosylation is present at Asn-96. Asn-156 carries N-linked (GlcNAc...) asparagine glycosylation.

As to quaternary structure, M-shaped tetramer of two CD180-LY86 heterodimers. As to expression, highly expressed in B-cells, monocytes and tonsil.

The protein localises to the secreted. The protein resides in the extracellular space. Its function is as follows. May cooperate with CD180 and TLR4 to mediate the innate immune response to bacterial lipopolysaccharide (LPS) and cytokine production. Important for efficient CD180 cell surface expression. The chain is Lymphocyte antigen 86 (LY86) from Homo sapiens (Human).